A 211-amino-acid chain; its full sequence is Thiamine-phosphate synthase (211 aa).

4-amino-2-methyl-5-(diphosphooxymethyl)pyrimidine contacts are provided by residues 36-40 (QLRDK) and N68. Mg(2+) contacts are provided by D69 and D88. S107 is a 4-amino-2-methyl-5-(diphosphooxymethyl)pyrimidine binding site. Position 133-135 (133-135 (TKS)) interacts with 2-[(2R,5Z)-2-carboxy-4-methylthiazol-5(2H)-ylidene]ethyl phosphate. K136 is a binding site for 4-amino-2-methyl-5-(diphosphooxymethyl)pyrimidine. 2-[(2R,5Z)-2-carboxy-4-methylthiazol-5(2H)-ylidene]ethyl phosphate is bound by residues G164 and 184 to 185 (IS).

It belongs to the thiamine-phosphate synthase family. It depends on Mg(2+) as a cofactor.

The enzyme catalyses 2-[(2R,5Z)-2-carboxy-4-methylthiazol-5(2H)-ylidene]ethyl phosphate + 4-amino-2-methyl-5-(diphosphooxymethyl)pyrimidine + 2 H(+) = thiamine phosphate + CO2 + diphosphate. The catalysed reaction is 2-(2-carboxy-4-methylthiazol-5-yl)ethyl phosphate + 4-amino-2-methyl-5-(diphosphooxymethyl)pyrimidine + 2 H(+) = thiamine phosphate + CO2 + diphosphate. It catalyses the reaction 4-methyl-5-(2-phosphooxyethyl)-thiazole + 4-amino-2-methyl-5-(diphosphooxymethyl)pyrimidine + H(+) = thiamine phosphate + diphosphate. The protein operates within cofactor biosynthesis; thiamine diphosphate biosynthesis; thiamine phosphate from 4-amino-2-methyl-5-diphosphomethylpyrimidine and 4-methyl-5-(2-phosphoethyl)-thiazole: step 1/1. In terms of biological role, condenses 4-methyl-5-(beta-hydroxyethyl)thiazole monophosphate (THZ-P) and 2-methyl-4-amino-5-hydroxymethyl pyrimidine pyrophosphate (HMP-PP) to form thiamine monophosphate (TMP). This chain is Thiamine-phosphate synthase, found in Halalkalibacterium halodurans (strain ATCC BAA-125 / DSM 18197 / FERM 7344 / JCM 9153 / C-125) (Bacillus halodurans).